The primary structure comprises 135 residues: Holo-[acyl-carrier-protein] synthase (135 aa).

Residues Asp-9 and Glu-63 each coordinate Mg(2+).

The protein belongs to the P-Pant transferase superfamily. AcpS family. The cofactor is Mg(2+).

The protein localises to the cytoplasm. It carries out the reaction apo-[ACP] + CoA = holo-[ACP] + adenosine 3',5'-bisphosphate + H(+). Functionally, transfers the 4'-phosphopantetheine moiety from coenzyme A to a Ser of acyl-carrier-protein. The protein is Holo-[acyl-carrier-protein] synthase of Paraburkholderia phymatum (strain DSM 17167 / CIP 108236 / LMG 21445 / STM815) (Burkholderia phymatum).